A 157-amino-acid polypeptide reads, in one-letter code: ATP synthase subunit b (157 aa).

The chain crosses the membrane as a helical span at residues 7–29 (MFGQLIMFTMFTWFCMKFVWPPI).

It belongs to the ATPase B chain family. F-type ATPases have 2 components, F(1) - the catalytic core - and F(0) - the membrane proton channel. F(1) has five subunits: alpha(3), beta(3), gamma(1), delta(1), epsilon(1). F(0) has three main subunits: a(1), b(2) and c(10-14). The alpha and beta chains form an alternating ring which encloses part of the gamma chain. F(1) is attached to F(0) by a central stalk formed by the gamma and epsilon chains, while a peripheral stalk is formed by the delta and b chains.

The protein localises to the cell inner membrane. F(1)F(0) ATP synthase produces ATP from ADP in the presence of a proton or sodium gradient. F-type ATPases consist of two structural domains, F(1) containing the extramembraneous catalytic core and F(0) containing the membrane proton channel, linked together by a central stalk and a peripheral stalk. During catalysis, ATP synthesis in the catalytic domain of F(1) is coupled via a rotary mechanism of the central stalk subunits to proton translocation. In terms of biological role, component of the F(0) channel, it forms part of the peripheral stalk, linking F(1) to F(0). The protein is ATP synthase subunit b of Ruthia magnifica subsp. Calyptogena magnifica.